Here is a 505-residue protein sequence, read N- to C-terminus: Hexose transporter 1 (505 aa).

The Cytoplasmic segment spans residues 1–27 (MNILRMDILSRGGTQEIEHRDGFFNTS). A helical transmembrane segment spans residues 28–48 (FQYVLSACLASFIFGYQVSVL). Topologically, residues 49–78 (NTIKSYIVVEFEWCSTKTDTSCEDSILKSS) are extracellular. A disulfide bridge connects residues Cys-62 and Cys-70. The helical transmembrane segment at 79 to 99 (FLLASVFIGAVLGSGFSGYLV) threads the bilayer. Topologically, residues 100–104 (KFGRR) are cytoplasmic. A helical transmembrane segment spans residues 105–125 (FSLMVIYIFFIFVSILTAISH). Over 126 to 134 (HFHTILYAR) the chain is Extracellular. Residues 135-155 (LLSGFGIGLITVSVPMYISEM) form a helical membrane-spanning segment. Residues 156-165 (THKDKKGAYG) lie on the Cytoplasmic side of the membrane. Residues 166–186 (VLHQLFITFGIFVAVLLGLFL) traverse the membrane as a helical segment. Residue Gln-169 coordinates alpha-D-glucose. Residue Gln-169 coordinates beta-D-glucose. Residues 187–208 (GDGPKINGKSIELSNFEMFWWR) are Extracellular-facing. Residues 209 to 229 (FMFFLPTIISLLGIILLIAFY) form a helical membrane-spanning segment. The Cytoplasmic segment spans residues 230-294 (KEETPYFLYE…SALKIPAYRN (65 aa)). Residues 295–315 (VIILGCILSGFQQFTGINVLV) traverse the membrane as a helical segment. Positions 306, 307, and 312 each coordinate alpha-D-glucose. A beta-D-glucose-binding site is contributed by Gln-306. Asn-312 contributes to the beta-D-glucose binding site. The Extracellular segment spans residues 316–332 (ANSNELYKEFLDKNLIT). A helical membrane pass occupies residues 333-353 (ILSVIMTAVNFLMTFPAIYII). Residue Asn-342 participates in beta-D-glucose binding. Residues 354 to 358 (EKIGR) lie on the Cytoplasmic side of the membrane. The chain crosses the membrane as a helical span at residues 359-379 (KTLLLGGCIGVICAFLPTVIA). The Extracellular portion of the chain corresponds to 380-393 (RQVWGPTKIVNGLS). Residues 394-414 (IAGTFLMIISFAVSYGPVLWI) form a helical membrane-spanning segment. Residue Trp-413 coordinates alpha-D-glucose. Residues 415 to 430 (YLHEMYPSEIKDSAAS) lie on the Cytoplasmic side of the membrane. A helical membrane pass occupies residues 431 to 451 (LASLINWVCAIIVVFPSDIII). Over 452–456 (KKSPS) the chain is Extracellular. A helical transmembrane segment spans residues 457–477 (ILFMFFSVMCIIAFLFIMFFI). At 478 to 505 (KETKGGEIGTSPYISLEERQKHIGKSKV) the chain is on the cytoplasmic side.

This sequence belongs to the major facilitator superfamily. Sugar transporter (TC 2.A.1.1) family. In terms of assembly, homodimer.

It is found in the cell membrane. It catalyses the reaction D-glucose(out) = D-glucose(in). The catalysed reaction is D-fructose(out) = D-fructose(in). The enzyme catalyses D-galactose(in) = D-galactose(out). It carries out the reaction D-mannose(out) = D-mannose(in). It catalyses the reaction D-glucosamine(out) = D-glucosamine(in). The catalysed reaction is D-xylose(out) = D-xylose(in). Its activity is regulated as follows. Inhibited by cytochalasin B. Sodium-independent facilitative hexose transporter. Can transport D-glucose and D-fructose. Can transport D-mannose, D-galactose, D-xylose and D-glucosamine. The polypeptide is Hexose transporter 1 (Plasmodium yoelii yoelii).